We begin with the raw amino-acid sequence, 240 residues long: 4-hydroxy-tetrahydrodipicolinate reductase (240 aa).

Residues 79 to 81 and 103 to 106 contribute to the NAD(+) site; these read ATT and SANM. His135 (proton donor/acceptor) is an active-site residue. Residue His136 participates in (S)-2,3,4,5-tetrahydrodipicolinate binding. The Proton donor role is filled by Lys139. (S)-2,3,4,5-tetrahydrodipicolinate is bound at residue 145–146; that stretch reads GT.

It belongs to the DapB family.

The protein resides in the cytoplasm. It catalyses the reaction (S)-2,3,4,5-tetrahydrodipicolinate + NAD(+) + H2O = (2S,4S)-4-hydroxy-2,3,4,5-tetrahydrodipicolinate + NADH + H(+). The enzyme catalyses (S)-2,3,4,5-tetrahydrodipicolinate + NADP(+) + H2O = (2S,4S)-4-hydroxy-2,3,4,5-tetrahydrodipicolinate + NADPH + H(+). The protein operates within amino-acid biosynthesis; L-lysine biosynthesis via DAP pathway; (S)-tetrahydrodipicolinate from L-aspartate: step 4/4. Catalyzes the conversion of 4-hydroxy-tetrahydrodipicolinate (HTPA) to tetrahydrodipicolinate. The protein is 4-hydroxy-tetrahydrodipicolinate reductase of Staphylococcus aureus (strain Mu3 / ATCC 700698).